The primary structure comprises 448 residues: Senescence/dehydration-associated protein At4g35985, chloroplastic (448 aa).

Residues 1-36 (MECSATPPKLYPTVDTSTTVAPLPKSSSSSSSTNNN) are disordered. Residues 1–56 (MECSATPPKLYPTVDTSTTVAPLPKSSSSSSSTNNNNLYPSINVNDLVNNIFPDPT) constitute a chloroplast transit peptide. Residues 26 to 36 (SSSSSSSTNNN) show a composition bias toward low complexity. In terms of domain architecture, Senescence spans 248–416 (IAAGSGQLIK…AWTVFKIRQA (169 aa)). The interval 422–448 (AMKPSSLAKTVVKTAAKERKKGKKSSK) is disordered. The segment covering 439-448 (ERKKGKKSSK) has biased composition (basic residues).

In terms of tissue distribution, expressed in leaves (especially in midribs and trichomes), apical meristemic regions, stems, roots and flowers.

It is found in the plastid. Its subcellular location is the chloroplast. The polypeptide is Senescence/dehydration-associated protein At4g35985, chloroplastic (Arabidopsis thaliana (Mouse-ear cress)).